The chain runs to 1044 residues: Pre-mRNA-splicing factor ATP-dependent RNA helicase DEAH1 (1044 aa).

The interval glutamate 106–alanine 206 is disordered. Basic and acidic residues predominate over residues valine 108–serine 121. Over residues aspartate 122–serine 132 the composition is skewed to basic residues. 2 positions are modified to phosphoserine: serine 135 and serine 138. Residues glutamate 157 to glutamate 166 are compositionally biased toward acidic residues. The segment covering glutamate 167 to alanine 206 has biased composition (basic and acidic residues). One can recognise a Helicase ATP-binding domain in the interval leucine 414 to proline 577. Glycine 427 to threonine 434 contributes to the ATP binding site. The DEAH box signature appears at aspartate 524–histidine 527. The region spanning isoleucine 600 to glycine 775 is the Helicase C-terminal domain.

Belongs to the DEAD box helicase family. DEAH subfamily. PRP2 sub-subfamily. As to expression, widely expressed.

It catalyses the reaction ATP + H2O = ADP + phosphate + H(+). Its function is as follows. Involved in pre-mRNA splicing. The polypeptide is Pre-mRNA-splicing factor ATP-dependent RNA helicase DEAH1 (Arabidopsis thaliana (Mouse-ear cress)).